The chain runs to 578 residues: Leucine-rich repeat-containing protein 15 (578 aa).

The signal sequence occupies residues 1-21 (MPLKHYLLLLVGCQAWALGLA). The region spanning 22–53 (YYGCPSECTCSRASQVECTGARIVAMPTPLPW) is the LRRNT domain. At 22-535 (YYGCPSECTC…TWGMTEAQSG (514 aa)) the chain is on the extracellular side. LRR repeat units lie at residues 54 to 75 (NAMS…LFLN), 78 to 99 (ALIA…AFRN), 102 to 123 (SLRY…VFQD), 126 to 147 (NLES…QFSQ), 150 to 171 (NLRE…AFDH), 174 to 195 (GLTK…LFQH), 198 to 219 (NLQV…TFDA), 222 to 243 (NLQE…LFHN), 246 to 267 (NLQR…IFMQ), 270 to 291 (QLNK…VFGP), 294 to 315 (NLRE…TFSH), 318 to 339 (QLQV…AFNG), 342 to 363 (NLRE…VFRS), 366 to 387 (NLQN…IFAN), and 390 to 411 (GLTT…IFDH). N-linked (GlcNAc...) asparagine glycosylation is present at N75. N369 carries N-linked (GlcNAc...) asparagine glycosylation. In terms of domain architecture, LRRCT spans 423–473 (NPWRCDSDILPLHNWLLLNRARLGTDTLPVCSSPANVRGQSLVIININFPG). Residues 476–500 (VQGPETPEVPSYPDTPSYPDTTSVS) form a disordered region. The chain crosses the membrane as a helical span at residues 536–556 (LAIAAIVIGIIALACSLAACI). Over 557-578 (CCCCCKKRSQAVLMQMKAPNEC) the chain is Cytoplasmic.

The protein localises to the cell membrane. The sequence is that of Leucine-rich repeat-containing protein 15 (Lrrc15) from Rattus norvegicus (Rat).